Reading from the N-terminus, the 180-residue chain is MPNIWGGMLEKTVKITFIFESEKRLNWEGYVNYLIFAHYFKLIYILLRNNKELLERILKDSLDNKEDYHKLGKYLHHDIMGYIRRHGYLSFLPFTPLPFYKELCEKFMTKIPEKPIIDYKCIERIENNKIIFEFEGEEECLRCLMYLKDSSIDESIKVIKSEEMVVKILEILLYILHNLL.

This is an uncharacterized protein from Methanocaldococcus jannaschii (strain ATCC 43067 / DSM 2661 / JAL-1 / JCM 10045 / NBRC 100440) (Methanococcus jannaschii).